The primary structure comprises 215 residues: Urease accessory protein UreG 2 (215 aa).

A GTP-binding site is contributed by 11–18 (GPVGSGKT).

Belongs to the SIMIBI class G3E GTPase family. UreG subfamily. In terms of assembly, homodimer. UreD, UreF and UreG form a complex that acts as a GTP-hydrolysis-dependent molecular chaperone, activating the urease apoprotein by helping to assemble the nickel containing metallocenter of UreC. The UreE protein probably delivers the nickel.

It localises to the cytoplasm. Its function is as follows. Facilitates the functional incorporation of the urease nickel metallocenter. This process requires GTP hydrolysis, probably effectuated by UreG. The chain is Urease accessory protein UreG 2 from Methylorubrum populi (strain ATCC BAA-705 / NCIMB 13946 / BJ001) (Methylobacterium populi).